We begin with the raw amino-acid sequence, 577 residues long: Arginine--tRNA ligase (577 aa).

A 'HIGH' region motif is present at residues 122-132 (PNVAKEMHVGH).

It belongs to the class-I aminoacyl-tRNA synthetase family. As to quaternary structure, monomer.

It localises to the cytoplasm. It catalyses the reaction tRNA(Arg) + L-arginine + ATP = L-arginyl-tRNA(Arg) + AMP + diphosphate. The protein is Arginine--tRNA ligase of Shigella flexneri serotype 5b (strain 8401).